The following is a 376-amino-acid chain: Cytochrome b (376 aa).

4 consecutive transmembrane segments (helical) span residues 28–48, 72–94, 107–127, and 169–189; these read YGFL…FLAS, WCFR…LHIL, SWIS…IGYV, and FFVL…IHIF. H78 and H92 together coordinate heme b. Heme b is bound by residues H173 and H187. H192 serves as a coordination point for a ubiquinone. 4 helical membrane-spanning segments follow: residues 214–234, 274–294, 317–337, and 340–360; these read LLSL…IQSI, IPSK…LFLL, VPII…CPLP, and IFIL…LFSL.

It belongs to the cytochrome b family. In terms of assembly, the main subunits of complex b-c1 are: cytochrome b, cytochrome c1 and the Rieske protein. Heme b is required as a cofactor.

It is found in the mitochondrion inner membrane. Functionally, component of the ubiquinol-cytochrome c reductase complex (complex III or cytochrome b-c1 complex) that is part of the mitochondrial respiratory chain. The b-c1 complex mediates electron transfer from ubiquinol to cytochrome c. Contributes to the generation of a proton gradient across the mitochondrial membrane that is then used for ATP synthesis. The protein is Cytochrome b (MT-CYB) of Plasmodium berghei.